A 119-amino-acid polypeptide reads, in one-letter code: MQTNTSNKKIRAVAKHIHMSPHKVRRVVSQIRGRSYEQALMILEFMPYRACNPILQLLSSAAANANHNFGLSKTNLFISEIQVNKGTFFKRFQPRAQGRGYPIHKPTCHITIVLNILPK.

Belongs to the universal ribosomal protein uL22 family. As to quaternary structure, part of the 50S ribosomal subunit.

It is found in the plastid. The protein localises to the chloroplast. Functionally, this protein binds specifically to 23S rRNA. Its function is as follows. The globular domain of the protein is located near the polypeptide exit tunnel on the outside of the subunit, while an extended beta-hairpin is found that lines the wall of the exit tunnel in the center of the 70S ribosome. This Marchantia polymorpha (Common liverwort) protein is Large ribosomal subunit protein uL22c (rpl22).